The sequence spans 264 residues: Putative [LysW]-aminoadipate/[LysW]-glutamate kinase (264 aa).

Residues 34–35 (GG), Arg61, and Asn169 contribute to the substrate site.

This sequence belongs to the acetylglutamate kinase family. LysZ subfamily.

It localises to the cytoplasm. The enzyme catalyses [amino-group carrier protein]-C-terminal-N-(1,4-dicarboxybutan-1-yl)-L-glutamine + ATP = [amino-group carrier protein]-C-terminal-N-(1-carboxy-5-phosphooxy-5-oxopentan-1-yl)-L-glutamine + ADP. It catalyses the reaction [amino-group carrier protein]-C-terminal-gamma-(L-glutamyl)-L-glutamate + ATP = [amino-group carrier protein]-C-terminal-gamma-(5-phospho-L-glutamyl)-L-glutamate + ADP. Its pathway is amino-acid biosynthesis; L-lysine biosynthesis via AAA pathway; L-lysine from L-alpha-aminoadipate (Thermus route): step 2/5. It functions in the pathway amino-acid biosynthesis; L-arginine biosynthesis. In terms of biological role, involved in both the arginine and lysine biosynthetic pathways. Phosphorylates the LysW-bound precursors glutamate (for arginine biosynthesis), respectively alpha-aminoadipate (for lysine biosynthesis). The protein is Putative [LysW]-aminoadipate/[LysW]-glutamate kinase of Ignicoccus hospitalis (strain KIN4/I / DSM 18386 / JCM 14125).